The primary structure comprises 345 residues: NADPH dehydrogenase (345 aa).

Residue 23–26 participates in FMN binding; it reads SPMC. Residue tyrosine 28 coordinates substrate. Residues alanine 60 and glutamine 102 each contribute to the FMN site. Residue 164-167 participates in substrate binding; the sequence is HGAH. Residues arginine 215 and 307 to 308 contribute to the FMN site; that span reads GR.

The protein belongs to the NADH:flavin oxidoreductase/NADH oxidase family. NamA subfamily. In terms of assembly, homotetramer. The cofactor is FMN.

It catalyses the reaction A + NADPH + H(+) = AH2 + NADP(+). Catalyzes the reduction of the double bond of an array of alpha,beta-unsaturated aldehydes and ketones. It also reduces the nitro group of nitroester and nitroaromatic compounds. It could have a role in detoxification processes. The chain is NADPH dehydrogenase from Bacillus cereus (strain AH820).